A 349-amino-acid chain; its full sequence is Peptide chain release factor 1 (349 aa).

Gln233 is modified (N5-methylglutamine).

The protein belongs to the prokaryotic/mitochondrial release factor family. Post-translationally, methylated by PrmC. Methylation increases the termination efficiency of RF1.

It is found in the cytoplasm. Functionally, peptide chain release factor 1 directs the termination of translation in response to the peptide chain termination codons UAG and UAA. The sequence is that of Peptide chain release factor 1 from Pelotomaculum thermopropionicum (strain DSM 13744 / JCM 10971 / SI).